The primary structure comprises 258 residues: Ribosomal RNA small subunit methyltransferase A (258 aa).

Residues histidine 13, leucine 15, glycine 40, glutamate 62, aspartate 87, and asparagine 108 each contribute to the S-adenosyl-L-methionine site.

Belongs to the class I-like SAM-binding methyltransferase superfamily. rRNA adenine N(6)-methyltransferase family. RsmA subfamily.

It is found in the cytoplasm. It catalyses the reaction adenosine(1518)/adenosine(1519) in 16S rRNA + 4 S-adenosyl-L-methionine = N(6)-dimethyladenosine(1518)/N(6)-dimethyladenosine(1519) in 16S rRNA + 4 S-adenosyl-L-homocysteine + 4 H(+). Functionally, specifically dimethylates two adjacent adenosines (A1518 and A1519) in the loop of a conserved hairpin near the 3'-end of 16S rRNA in the 30S particle. May play a critical role in biogenesis of 30S subunits. This Sulfurihydrogenibium sp. (strain YO3AOP1) protein is Ribosomal RNA small subunit methyltransferase A.